We begin with the raw amino-acid sequence, 506 residues long: L-amino-acid oxidase (506 aa).

An N-terminal signal peptide occupies residues 1–18 (MNVFFTFSLLFLAALGSC). The cysteines at positions 28 and 191 are disulfide-linked. Glu-36 lines the Zn(2+) pocket. FAD contacts are provided by residues 61 to 62 (MS), Ser-62, 81 to 82 (EA), Arg-89, and 105 to 108 (GPMR). Arg-108 contacts substrate. Residues Glu-111, Glu-118, and Glu-150 each contribute to the Zn(2+) site. Asn-190 carries N-linked (GlcNAc...) asparagine glycosylation. Residue Asp-219 participates in Zn(2+) binding. Position 241 (His-241) interacts with substrate. Glu-248 serves as a coordination point for Zn(2+). An FAD-binding site is contributed by Val-279. Residues Glu-299 and His-332 each coordinate Zn(2+). Cys-349 and Cys-430 form a disulfide bridge. Tyr-390 provides a ligand contact to substrate. Residue His-458 coordinates Zn(2+). FAD contacts are provided by residues Glu-475 and 482 to 487 (GWIDST). 482-483 (GW) contacts substrate.

The protein belongs to the flavin monoamine oxidase family. FIG1 subfamily. As to quaternary structure, homodimer; non-covalently linked. Stabilized by a single zinc-binding site located at the dimer interface (Asp-219, His-332 and His-458). Other zinc-bind sites can be understood as transient and non-specific, and appear due to the high concentration of zinc ions used in the crystallization experiments. FAD serves as cofactor. Expressed by the venom gland.

The protein resides in the secreted. The catalysed reaction is an L-alpha-amino acid + O2 + H2O = a 2-oxocarboxylate + H2O2 + NH4(+). It carries out the reaction L-leucine + O2 + H2O = 4-methyl-2-oxopentanoate + H2O2 + NH4(+). It catalyses the reaction L-phenylalanine + O2 + H2O = 3-phenylpyruvate + H2O2 + NH4(+). The enzyme catalyses L-tryptophan + O2 + H2O = indole-3-pyruvate + H2O2 + NH4(+). The catalysed reaction is L-methionine + O2 + H2O = 4-methylsulfanyl-2-oxobutanoate + H2O2 + NH4(+). It carries out the reaction L-isoleucine + O2 + H2O = (S)-3-methyl-2-oxopentanoate + H2O2 + NH4(+). It catalyses the reaction L-tyrosine + O2 + H2O = 3-(4-hydroxyphenyl)pyruvate + H2O2 + NH4(+). In terms of biological role, catalyzes an oxidative deamination of predominantly hydrophobic and aromatic L-amino acids, thus producing hydrogen peroxide that may contribute to the diverse toxic effects of this enzyme. Shows high catalytic activity against L-Met, L-Leu, L-Phe, L-Trp, L-Tyr, L-Ile. Shows no or weak activity on L-Cys, L-Val, L-Gln, L-Thr, L-Ser, L-Lys, L-Arg, L-Asn, L-Glu, L-Gly, L-Pro, L-Asp and L-His. Induces platelet aggregation in platelet-rich plasma, probably due to hydrogen peroxide production, since catalase inhibits aggregation effect. Induces moderate mouse paw edema. Induces apoptosis and shows cytotoxicity against several cancer cell lines, which is inhibited by catalase. Shows hemolytic activity and antibacterial activities against both Gram-positive and Gram-negative bacteria. Has parasiticidal activities against both trypanosomes and leishmania, as a result of enzyme-catalyzed hydrogen peroxide production. Unlike other snake venom L-amino acid oxidases, does not induce hemorrhage (with 50 ug of enzyme). The chain is L-amino-acid oxidase from Bothrops atrox (Barba amarilla).